A 425-amino-acid polypeptide reads, in one-letter code: UPF0597 protein VIBHAR_03081 (425 aa).

It belongs to the UPF0597 family.

This chain is UPF0597 protein VIBHAR_03081, found in Vibrio campbellii (strain ATCC BAA-1116).